Here is a 134-residue protein sequence, read N- to C-terminus: L-ectoine synthase (134 aa).

The protein belongs to the ectoine synthase family.

The catalysed reaction is (2S)-4-acetamido-2-aminobutanoate = L-ectoine + H2O. It functions in the pathway amine and polyamine biosynthesis; ectoine biosynthesis; L-ectoine from L-aspartate 4-semialdehyde: step 3/3. Its function is as follows. Catalyzes the circularization of gamma-N-acetyl-alpha,gamma-diaminobutyric acid (ADABA) to ectoine (1,4,5,6-tetrahydro-2-methyl-4-pyrimidine carboxylic acid), which is an excellent osmoprotectant. The protein is L-ectoine synthase (ectC) of Sporosarcina pasteurii (Bacillus pasteurii).